We begin with the raw amino-acid sequence, 278 residues long: Large ribosomal subunit protein uL2 (278 aa).

A disordered region spans residues 218-278 (RPHNRGVVMN…IMRSRHQRKK (61 aa)).

The protein belongs to the universal ribosomal protein uL2 family. As to quaternary structure, part of the 50S ribosomal subunit. Forms a bridge to the 30S subunit in the 70S ribosome.

In terms of biological role, one of the primary rRNA binding proteins. Required for association of the 30S and 50S subunits to form the 70S ribosome, for tRNA binding and peptide bond formation. It has been suggested to have peptidyltransferase activity; this is somewhat controversial. Makes several contacts with the 16S rRNA in the 70S ribosome. The chain is Large ribosomal subunit protein uL2 from Rhizobium etli (strain CIAT 652).